A 258-amino-acid polypeptide reads, in one-letter code: 5-oxoprolinase subunit A (258 aa).

The protein belongs to the LamB/PxpA family. As to quaternary structure, forms a complex composed of PxpA, PxpB and PxpC.

It carries out the reaction 5-oxo-L-proline + ATP + 2 H2O = L-glutamate + ADP + phosphate + H(+). Catalyzes the cleavage of 5-oxoproline to form L-glutamate coupled to the hydrolysis of ATP to ADP and inorganic phosphate. In Deinococcus radiodurans (strain ATCC 13939 / DSM 20539 / JCM 16871 / CCUG 27074 / LMG 4051 / NBRC 15346 / NCIMB 9279 / VKM B-1422 / R1), this protein is 5-oxoprolinase subunit A.